We begin with the raw amino-acid sequence, 309 residues long: Taste receptor type 2 member 20 (309 aa).

Residues 1–6 (MMSFLH) lie on the Extracellular side of the membrane. A helical membrane pass occupies residues 7-27 (IVFSILVVVAFILGNFANGFI). The Cytoplasmic portion of the chain corresponds to 28 to 46 (ALINFIAWVKRQKISSADQ). The chain crosses the membrane as a helical span at residues 47-67 (IIAALAVSRVGLLWVILLHWY). Topologically, residues 68 to 79 (STVLNPTSSNLK) are extracellular. A helical transmembrane segment spans residues 80-100 (VIIFISNAWAVTNHFSIWLAT). The Cytoplasmic segment spans residues 101 to 125 (SLSIFYLLKIVNFSRLIFHHLKRKA). The chain crosses the membrane as a helical span at residues 126–146 (KSVVLVIVLGSLFFLVCXLVM). Residues 147 to 178 (KNTYINVWTEECEGNVTWKIKLRNAMHLSNLT) are Extracellular-facing. The chain crosses the membrane as a helical span at residues 179-199 (VAMLANLIPFTLTLISFLLLI). At 200-229 (YSLCKHLKKMQLHGKGSQDPSTKIHIKALQ) the chain is on the cytoplasmic side. Residues 230–250 (TVTSFLILLAIYFLCLITSFW) traverse the membrane as a helical segment. The Extracellular portion of the chain corresponds to 251 to 259 (NSKMRPKEI). Residues 260–280 (VLMLCQAFGIIYPSFHSFILI) form a helical membrane-spanning segment. At 281-309 (WGNKTLKQTFLSVLWQVTCWAKGQNQSTP) the chain is on the cytoplasmic side.

It belongs to the G-protein coupled receptor T2R family.

It is found in the membrane. Receptor that may play a role in the perception of bitterness and is gustducin-linked. May play a role in sensing the chemical composition of the gastrointestinal content. The activity of this receptor may stimulate alpha gustducin, mediate PLC-beta-2 activation and lead to the gating of TRPM5. The protein is Taste receptor type 2 member 20 (TAS2R20) of Pan troglodytes (Chimpanzee).